Consider the following 642-residue polypeptide: Threonine--tRNA ligase (642 aa).

In terms of domain architecture, TGS spans 1–61 (MPVITLPDGS…ETDAELSIIT (61 aa)). A catalytic region spans residues 243 to 534 (DHRKIGKQLD…LIEEYAGRFP (292 aa)). Positions 334, 385, and 511 each coordinate Zn(2+).

Belongs to the class-II aminoacyl-tRNA synthetase family. Homodimer. It depends on Zn(2+) as a cofactor.

The protein localises to the cytoplasm. The catalysed reaction is tRNA(Thr) + L-threonine + ATP = L-threonyl-tRNA(Thr) + AMP + diphosphate + H(+). In terms of biological role, catalyzes the attachment of threonine to tRNA(Thr) in a two-step reaction: L-threonine is first activated by ATP to form Thr-AMP and then transferred to the acceptor end of tRNA(Thr). Also edits incorrectly charged L-seryl-tRNA(Thr). The chain is Threonine--tRNA ligase from Shewanella sp. (strain MR-7).